A 610-amino-acid polypeptide reads, in one-letter code: UvrABC system protein C (610 aa).

One can recognise a GIY-YIG domain in the interval 19–97 (GAPGVYKMLD…IKRHKPRYNI (79 aa)). The region spanning 207–242 (EALIDRLAQRMEQAAQRLEFEKAARYRDQISNLRTV) is the UVR domain.

The protein belongs to the UvrC family. In terms of assembly, interacts with UvrB in an incision complex.

It is found in the cytoplasm. Its function is as follows. The UvrABC repair system catalyzes the recognition and processing of DNA lesions. UvrC both incises the 5' and 3' sides of the lesion. The N-terminal half is responsible for the 3' incision and the C-terminal half is responsible for the 5' incision. The chain is UvrABC system protein C from Methylococcus capsulatus (strain ATCC 33009 / NCIMB 11132 / Bath).